A 106-amino-acid polypeptide reads, in one-letter code: Transcriptional and immune response regulator (106 aa).

As to quaternary structure, monomer. Interacts with NOTCH2 (via ANK repeats), the interaction inhibits the nuclear translocation of NOTCH2 N2ICD. Interacts (C-terminus) with CBY1 (C-terminus), TCIM competes with CTNNB1 for the interaction with CBY1. In terms of tissue distribution, ubiquitous. Expressed in thyroid papillary carcinoma. Expressed in liver, expression levels decrease in hepatocellular carcinoma. Slightly detected in normal lung, its expression is highly induced in lung cancer cells (at protein level).

The protein localises to the cytoplasm. The protein resides in the nucleus. Its subcellular location is the nucleolus. It is found in the nucleus speckle. In terms of biological role, seems to be involved in the regulation of cell growth an differentiation, may play different and opposite roles depending on the tissue or cell type. May enhance the WNT-CTNNB1 pathway by relieving antagonistic activity of CBY1. Enhances the proliferation of follicular dendritic cells. Plays a role in the mitogen-activated MAPK2/3 signaling pathway, positively regulates G1-to-S-phase transition of the cell cycle. In endothelial cells, enhances key inflammatory mediators and inflammatory response through the modulation of NF-kappaB transcriptional regulatory activity. Involved in the regulation of heat shock response, seems to play a positive feedback with HSF1 to modulate heat-shock downstream gene expression. Plays a role in the regulation of hematopoiesis even if the mechanisms are unknown. In cancers such as thyroid or lung cancer, it has been described as promoter of cell proliferation, G1-to-S-phase transition and inhibitor of apoptosis. However, it negatively regulates self-renewal of liver cancer cells via suppresion of NOTCH2 signaling. The polypeptide is Transcriptional and immune response regulator (Homo sapiens (Human)).